Here is a 921-residue protein sequence, read N- to C-terminus: Protein translocase subunit SecA (921 aa).

Residues Gln85, 103–107, and Asp514 contribute to the ATP site; that span reads GEGKT. Residues Cys905, Cys907, Cys916, and His917 each coordinate Zn(2+).

The protein belongs to the SecA family. In terms of assembly, monomer and homodimer. Part of the essential Sec protein translocation apparatus which comprises SecA, SecYEG and auxiliary proteins SecDF-YajC and YidC. Zn(2+) serves as cofactor.

The protein resides in the cell inner membrane. The protein localises to the cytoplasm. The catalysed reaction is ATP + H2O + cellular proteinSide 1 = ADP + phosphate + cellular proteinSide 2.. Functionally, part of the Sec protein translocase complex. Interacts with the SecYEG preprotein conducting channel. Has a central role in coupling the hydrolysis of ATP to the transfer of proteins into and across the cell membrane, serving both as a receptor for the preprotein-SecB complex and as an ATP-driven molecular motor driving the stepwise translocation of polypeptide chains across the membrane. The sequence is that of Protein translocase subunit SecA from Herminiimonas arsenicoxydans.